The following is a 158-amino-acid chain: Small ribosomal subunit protein uS9 (158 aa).

It belongs to the universal ribosomal protein uS9 family.

The protein is Small ribosomal subunit protein uS9 of Rhodopseudomonas palustris (strain BisA53).